We begin with the raw amino-acid sequence, 2515 residues long: MARKLSVLEVLLIIFCLIVVTIDILLLLLVLEETSDTSFTPECPEIPQSERIDCTPDQEVTEDICRWQYKCCWSPVADANVPRCFFPWNWGYEASNGHTNTSTGFTAQLKRLPSPSLFGNDVATTLFTAEYQTSNRFHFKITDFNNIRYEVSHENINLVDGIADASNLSYYVEVTDKPFSIKIMRTSNRRVLLDTSIGPLQFAQQYLQLSFRLPSANVYGLGEHVHQQYRHNMTWKTWPIFTRDATPTEGMINLYGAHTFFLCLEDARGSSFGVFLMNSNAMEVTLQPAPAITYRTIGGILDFYVFLGNTPEQVVQEYLELVGRPFFPPYWSLGFQLSRRDYGGINKLKEVVSRNRLAEIPYDVQYSDIDYMDGKKDFTVDEVAYSGLPDFVKELHDNGQKYLIIMNPGISKNSNYEPYNNGSLKRVWILGSNGFAVGEGYPGPTVFPDYTNPVCTEWWTDQVAKFHDHLEFDGVWIEMNEVSSLLQASNNQCESNNLNFPPFLPRVLDHLLFARTLCMDTEFHGGLHYDIHSLYGHSMARTTNLALETIFMNNRSFILSRSTFAGSGKFAAHWLGDNAATWDDLRWSIPTILEFNLFGIPMVGANICGYNNNVTEELCRRWMQLGAFYPLPRNHNGPGFRDQDPAAFGVDSLLLKSSRHYLNIRYTLLPYLYTLFYHAHTRGETVARPLVHEFYQDSATWDVHEQFLWGPGLLITPVLYEGVDEVKAYIPDATWYDYETGVAISWRKQLVNMLLPGDKIGLHLRGGYIFPTQKPNTTTEASRRNSLGLIIALDYKREAKGELYWDDGVSKDAVTEKKYILYDFSVTSNHLQAKIINNNYMDTDNLMFTDITILGMDKQPANFIVLLNNVATSSPSVVYNASTKVVTITDLQGLVLGQEFSIRWNLPVSDLEKFNCYPDDPTASEESCRQRGCLWEDTSTPGVPTCYYDTIPNYVASDIQYLNTSITADLSLPMAPESAAAAASDSLSAKISFLHLKVIYHTATMLQVKIYDPTNKRYEVPVPLNTPPQPVGDPENRLYDVRIQNNPFGIQIQRKNSSTVIWDSQLPGFIFNDMFLSISTRLPSQYIYGFGETEHTTFRRNMNWNTWGMFAHDEPPAYKKNSYGVHPYYMALEEDGSAHGVLLLNSNAMDVTLQPTPALTYRTTGGILDFYIVLGPTPELVTQQYTELIGRPAMIPYWALGFHLSRYGYQNDAEISSLYDAMVAAQIPYDVQHVDIDYMNRKLDFTLSANFQNLSLLIEQMKKNGMRFILILDPAISGNETQYLPFIRGQENNVFIKWPDTNDIVWGKVWPDLPNVIVDGSLDHETQVKLYRAYVAFPDFFRNSTAAWWKKEIEELYANPREPEKSLKFDGLWIDMNEPSNFVDGSVRGCSNEMLNNPPYMPYLESRDKGLSSKTLCMESQQILPDSSPVEHYNVHNLYGWSQTRPTYEAVQEVTGQRGVIITRSTFPSSGRWGGHRLGNNTAAWDQLGKSIIGMMEFSLFGIPYTGADICGFFGDAEYEMCVRWMQLGAFYPFSRNHNNIGTRRQDPVAWNSTFEMLSRKVLETRYTLLPYLYTLMHKAHVEGSTVVRPLLHEFTDDRTTWDIDRQFMLGPAILISPVLETSTFEISAYFPRARWYDYSTGTSSTSTGQRKILKAPLDHINLHVRGGYILPWQEPAMNTHSSRQNFMGLIVALDDNGTAEGQVFWDDGQSIDTYENGNYFLANFIAAQNILQIQTIHNKYLSDSNPLKVGYIRIWGVNTYVTQVSFTYDNRQFMETNFKSEPYNQILTIQLTDKTINLEKLTEVTWIDGGPVLPTPTKTSTIPMSSHPSPSTTNATSSETITSSASANTTTGTTDTVPITTTSFPSTTSVTTNTTVPDTTSPFPTSTTNASTNATVPITTTPFPTSTIGVTTNATVPNTTAPFPTNASTASTNATVPITTTCFATSTIGVTTNATVPDTTAPFPTNTTTASTNATIPITTTPFATSTISVTTSTTVPDTTAPFPTSTTSASTNATPVPITTTLFATSTIGVTTGTTVPDTTAPFPTSTTSTSTSATVPITTTPSPTNTADANTSNTVPNTTMPSPTSSTTVSTIATVPISVTPSLTSTADATISTTVLIATTSSLTGTTDVSTSTTINNISTPVQTNTTNASTSTNVANITATSHTSTDDTVPNNTVPVTAIPSLANTGVDTTSNSFSIMTTSFSESTNAMNTTVIMATTSPTSTDVASTNNDASMTNFLLATMSAGNITSNSISITTTSFGNSVPFVTTPSPSTDATTTSNNTNPGMTTYYQTSPTIPTHTLTSIPSSITSILSMFPTSNTFTTDKITNFTTPTNANTIIFNTLDTKSTMVIDATVTTTSTKDNTMSPDTTVTSIDKFTTHITQFATPHSATTTTLALSHTSLAPTNLSNLGTMDITDADNSSSVTGNTTHISVSNLTTASVTITATGLDSQTPHMVINSVATYLPITATSATTDTTNITKYALNTTTPDSTVHTSATAPTYIANAINATQVP.

Residues 1-9 (MARKLSVLE) are Cytoplasmic-facing. Residues 10–30 (VLLIIFCLIVVTIDILLLLLV) traverse the membrane as a helical segment. The Lumenal segment spans residues 31–482 (LEETSDTSFT…DGVWIEMNEV (452 aa)). Residues 41-88 (PECPEIPQSERIDCTPDQEVTEDICRWQYKCCWSPVADANVPRCFFPW) form the P-type 1 domain. Intrachain disulfides connect C43–C72, C54–C71, and C65–C84. The tract at residues 152-865 (SHENINLVDG…MDKQPANFIV (714 aa)) is maltase. The N-linked (GlcNAc...) asparagine glycan is linked to N167. Sulfotyrosine is present on Y371. The N-linked (GlcNAc...) asparagine glycan is linked to N421. The active-site Nucleophile is the E478. E481 is a catalytic residue. 3 disulfide bridges follow: C608–C619, C916–C933, and C928–C946. N613 is a glycosylation site (N-linked (GlcNAc...) asparagine). The P-type 2 domain occupies 904-950 (WNLPVSDLEKFNCYPDDPTASEESCRQRGCLWEDTSTPGVPTCYYDT). The interval 1023–1766 (PLNTPPQPVG…GVNTYVTQVS (744 aa)) is glucoamylase. Y1238 carries the sulfotyrosine modification. The active-site Nucleophile is the D1375. The active site involves E1378. Disordered stretches follow at residues 1816–1901 (TPTK…PITT), 1994–2015 (STTV…STNA), and 2037–2091 (TVPD…SSTT). The span at 1817-1831 (PTKTSTIPMSSHPSP) shows a compositional bias: polar residues. Positions 1832–1901 (STTNATSSET…STNATVPITT (70 aa)) are enriched in low complexity. N2249 is a glycosylation site (N-linked (GlcNAc...) asparagine).

This sequence belongs to the glycosyl hydrolase 31 family.

It is found in the membrane. It catalyses the reaction Hydrolysis of terminal (1-&gt;4)-linked alpha-D-glucose residues successively from non-reducing ends of the chains with release of beta-D-glucose.. This chain is Probable maltase-glucoamylase 2, found in Homo sapiens (Human).